A 28-amino-acid chain; its full sequence is Flagellar filament 34 kDa core protein (28 aa).

It belongs to the bacterial flagellin family. The flagellum consists of an outer layer composed of repeating units of FlaA around a core that contains several antigenically related polypeptides.

The protein localises to the periplasmic flagellum. The protein resides in the periplasm. Its function is as follows. Component of the core of the flagella. This Treponema phagedenis protein is Flagellar filament 34 kDa core protein.